We begin with the raw amino-acid sequence, 133 residues long: Small ribosomal subunit protein bS6 (133 aa).

Basic and acidic residues predominate over residues 106-125; that stretch reads REERVERAPRAPRPEVKAEP. Positions 106-133 are disordered; sequence REERVERAPRAPRPEVKAEPEAEATAEA.

This sequence belongs to the bacterial ribosomal protein bS6 family.

Binds together with bS18 to 16S ribosomal RNA. In Psychromonas ingrahamii (strain DSM 17664 / CCUG 51855 / 37), this protein is Small ribosomal subunit protein bS6.